The chain runs to 59 residues: Three-finger toxin MS1 (59 aa).

Intrachain disulfides connect C3–C22, C17–C39, C41–C52, and C53–C58.

This sequence belongs to the three-finger toxin family. Short-chain subfamily. Type I alpha-neurotoxin sub-subfamily. Expressed by the venom gland.

The protein resides in the secreted. In terms of biological role, produces peripheral paralysis by blocking neuromuscular transmission at the postsynaptic site. Binds to and inhibits the endogenous nicotinic acetylcholine receptors (nAChR) in human rhabdomyosarcoma TE 671 cell line with an IC(50) of 48.2 mM. This neurotoxin is lethal to mice by intraperitoneal injection and to zebrafish by injection at the back of the dorsolateral region. The sequence is that of Three-finger toxin MS1 from Micrurus surinamensis (Surinam coral snake).